The chain runs to 209 residues: MGAGSSKPEASAGSKHIFESNSPIQFSSNLVDGLQSNTETDSARAKSLELEIQNRVAKELERLRAREQQTLAEIEKRLSEAKDTGSFASAPSAPAVTHYPAGSLDLDAPRIPFAGREYAPPPPAAVEVAAVNKELNRESVNSEIEELRVKLEGRKKLAELDEGVAKAQKDVVSCLRLNDRRPLDCWKEVAEFKKEVARLEEGFVDRIVG.

Coiled coils occupy residues 48–86 (LELE…DTGS) and 127–156 (EVAA…GRKK).

It belongs to the MICOS complex subunit Mic19 family. As to quaternary structure, component of the mitochondrial contact site and cristae organizing system (MICOS) complex.

Its subcellular location is the mitochondrion inner membrane. In terms of biological role, component of the MICOS complex, a large protein complex of the mitochondrial inner membrane that plays crucial roles in the maintenance of crista junctions, inner membrane architecture, and formation of contact sites to the outer membrane. Involved in osmoadaptation. The sequence is that of MICOS complex subunit mic19 from Emericella nidulans (strain FGSC A4 / ATCC 38163 / CBS 112.46 / NRRL 194 / M139) (Aspergillus nidulans).